The sequence spans 328 residues: Neuropeptides B/W receptor type 1 (328 aa).

At 1–37 the chain is on the extracellular side; it reads MDNASFSEPWPANASGPDPALSCSNASTLAPLPAPLA. Residues N3, N13, and N25 are each glycosylated (N-linked (GlcNAc...) asparagine). Residues 38-61 traverse the membrane as a helical segment; the sequence is VAVPVVYAVICAVGLAGNSAVLYV. Topologically, residues 62–72 are cytoplasmic; it reads LLRAPRMKTVT. The helical transmembrane segment at 73-97 threads the bilayer; the sequence is NLFILNLAIADELFTLVLPINIADF. The Extracellular portion of the chain corresponds to 98–112; it reads LLRQWPFGELMCKLI. Cysteines 109 and 188 form a disulfide. Residues 113–132 form a helical membrane-spanning segment; the sequence is VAIDQYNTFSSLYFLTVMSA. At 133 to 157 the chain is on the cytoplasmic side; sequence DRYLVVLATAESRRVAGRTYSAARA. Residues 158-177 form a helical membrane-spanning segment; the sequence is VSLAVWGIVTLVVLPFAVFA. Topologically, residues 178–202 are extracellular; sequence RLDDEQGRRQCVLVFPQPEAFWWRA. Residues 203–224 form a helical membrane-spanning segment; the sequence is SRLYTLVLGFAIPVSTICVLYT. Residues 225 to 248 are Cytoplasmic-facing; it reads TLLCRLHAMRLDSHAKALERAKKR. A helical transmembrane segment spans residues 249 to 273; the sequence is VTFLVVAILAVCLLCWTPYHLSTVV. The Extracellular portion of the chain corresponds to 274-283; that stretch reads ALTTDLPQTP. Residues 284-298 traverse the membrane as a helical segment; it reads LVIAISYFITSLSYA. Residues 299–328 lie on the Cytoplasmic side of the membrane; the sequence is NSCLNPFLYAFLDASFRRNLRQLITCRAAA.

This sequence belongs to the G-protein coupled receptor 1 family. Found in cerebellum and frontal cortex. Detected at high levels in hippocampus, amygdala and trachea; at moderate levels in fetal brain, pituitary gland and prostate. Not in caudate, accumbens, kidney or liver. Also detected at high levels in lung carcinoma.

It localises to the cell membrane. Its function is as follows. Interacts specifically with a number of opioid ligands. Receptor for neuropeptides B and W, which may be involved in neuroendocrine system regulation, food intake and the organization of other signals. Has a higher affinity for neuropeptide B. This Homo sapiens (Human) protein is Neuropeptides B/W receptor type 1 (NPBWR1).